A 75-amino-acid chain; its full sequence is MPITSKYTDEQVEKILAEVALVLEKHAASPELTLMIAGNIATNVLNQRVAASQRKLIAEKFAQALMSSLETPKTH.

This sequence belongs to the UPF0352 family.

The polypeptide is UPF0352 protein VP2129 (Vibrio parahaemolyticus serotype O3:K6 (strain RIMD 2210633)).